We begin with the raw amino-acid sequence, 737 residues long: Polyribonucleotide nucleotidyltransferase (737 aa).

2 residues coordinate Mg(2+): Asp489 and Asp495. Positions 556-615 (PKIDTIKIDVDKIKIVIGKGGETIDKIIAETGVKIDIDEEGNVSIYSSDQDAINRAKEII) constitute a KH domain. One can recognise an S1 motif domain in the interval 625–693 (DEVYRAKVVR…EKGRIDASMK (69 aa)). The disordered stretch occupies residues 691-737 (SMKALLPRPPKPEHDEKGEKSERPHRPRHHKDHKPKKEFTETPKDSE). The segment covering 700–714 (PKPEHDEKGEKSERP) has biased composition (basic and acidic residues). Positions 715-724 (HRPRHHKDHK) are enriched in basic residues. Basic and acidic residues predominate over residues 725–737 (PKKEFTETPKDSE).

The protein belongs to the polyribonucleotide nucleotidyltransferase family. It depends on Mg(2+) as a cofactor.

It is found in the cytoplasm. The catalysed reaction is RNA(n+1) + phosphate = RNA(n) + a ribonucleoside 5'-diphosphate. Involved in mRNA degradation. Catalyzes the phosphorolysis of single-stranded polyribonucleotides processively in the 3'- to 5'-direction. In Streptococcus pneumoniae serotype 19F (strain G54), this protein is Polyribonucleotide nucleotidyltransferase.